We begin with the raw amino-acid sequence, 180 residues long: NAD(P)H-quinone oxidoreductase subunit I, chloroplastic (180 aa).

2 4Fe-4S ferredoxin-type domains span residues 55 to 84 and 95 to 124; these read GRIHFEFDKCIACEVCVRVCPIDLPVVDWR and LNYSIDFGVCIFCGNCVEYCPTSCLSMTEE. [4Fe-4S] cluster-binding residues include Cys-64, Cys-67, Cys-70, Cys-74, Cys-104, Cys-107, Cys-110, and Cys-114.

The protein belongs to the complex I 23 kDa subunit family. In terms of assembly, NDH is composed of at least 16 different subunits, 5 of which are encoded in the nucleus. Requires [4Fe-4S] cluster as cofactor.

Its subcellular location is the plastid. The protein localises to the chloroplast thylakoid membrane. It carries out the reaction a plastoquinone + NADH + (n+1) H(+)(in) = a plastoquinol + NAD(+) + n H(+)(out). The enzyme catalyses a plastoquinone + NADPH + (n+1) H(+)(in) = a plastoquinol + NADP(+) + n H(+)(out). Functionally, NDH shuttles electrons from NAD(P)H:plastoquinone, via FMN and iron-sulfur (Fe-S) centers, to quinones in the photosynthetic chain and possibly in a chloroplast respiratory chain. The immediate electron acceptor for the enzyme in this species is believed to be plastoquinone. Couples the redox reaction to proton translocation, and thus conserves the redox energy in a proton gradient. The polypeptide is NAD(P)H-quinone oxidoreductase subunit I, chloroplastic (Agrostis stolonifera (Creeping bentgrass)).